We begin with the raw amino-acid sequence, 375 residues long: Type II restriction enzyme ApaLI (375 aa).

It catalyses the reaction Endonucleolytic cleavage of DNA to give specific double-stranded fragments with terminal 5'-phosphates.. Functionally, a subtype P restriction enzyme that recognizes the double-stranded sequence 5'-GTGCAC-3' and cleaves after G-1. This Acetobacter pasteurianus (Acetobacter turbidans) protein is Type II restriction enzyme ApaLI.